The primary structure comprises 380 residues: Tryptophan--tRNA ligase (380 aa).

The 'HIGH' region signature appears at 81 to 89; it reads PSLGMHIGH. Residues 253–257 carry the 'KMSKS' region motif; sequence KMSSS.

The protein belongs to the class-I aminoacyl-tRNA synthetase family.

It is found in the cytoplasm. The catalysed reaction is tRNA(Trp) + L-tryptophan + ATP = L-tryptophyl-tRNA(Trp) + AMP + diphosphate + H(+). The sequence is that of Tryptophan--tRNA ligase from Saccharolobus solfataricus (strain ATCC 35092 / DSM 1617 / JCM 11322 / P2) (Sulfolobus solfataricus).